A 376-amino-acid chain; its full sequence is Succinyl-diaminopimelate desuccinylase 1 (376 aa).

His-67 provides a ligand contact to Zn(2+). Residue Asp-69 is part of the active site. A Zn(2+)-binding site is contributed by Asp-100. Residue Glu-134 is the Proton acceptor of the active site. Positions 135, 163, and 349 each coordinate Zn(2+).

Belongs to the peptidase M20A family. DapE subfamily. Homodimer. It depends on Zn(2+) as a cofactor. Co(2+) serves as cofactor.

It carries out the reaction N-succinyl-(2S,6S)-2,6-diaminopimelate + H2O = (2S,6S)-2,6-diaminopimelate + succinate. It functions in the pathway amino-acid biosynthesis; L-lysine biosynthesis via DAP pathway; LL-2,6-diaminopimelate from (S)-tetrahydrodipicolinate (succinylase route): step 3/3. Functionally, catalyzes the hydrolysis of N-succinyl-L,L-diaminopimelic acid (SDAP), forming succinate and LL-2,6-diaminopimelate (DAP), an intermediate involved in the bacterial biosynthesis of lysine and meso-diaminopimelic acid, an essential component of bacterial cell walls. The protein is Succinyl-diaminopimelate desuccinylase 1 of Shewanella loihica (strain ATCC BAA-1088 / PV-4).